Here is a 1080-residue protein sequence, read N- to C-terminus: Myocardin-related transcription factor B (1080 aa).

One copy of the RPEL 1 repeat lies at 40-65 (EVLQLRLQQRRTREQLVDQGIMPPLK). The residue at position 66 (Ser-66) is a Phosphoserine. RPEL repeat units follow at residues 84–109 (NFLK…EETF) and 128–153 (DDLN…PVDS). 4 disordered regions span residues 170–222 (THGE…AQFT), 234–311 (TPLT…EPQM), 352–384 (PIKT…SSLD), and 477–501 (PHVE…LSTD). 2 stretches are compositionally biased toward polar residues: residues 188–200 (QPAS…SAAS) and 240–259 (QPPT…SSAK). Basic and acidic residues predominate over residues 272–287 (NPNDKHRSKKCKDPKP). A compositionally biased stretch (low complexity) spans 358-370 (NSSSGSNSGSSSS). The SAP domain maps to 383 to 417 (LDDLKVSELKTELKLRGLPVSGTKPDLIERLKPYQ). Residues Ser-531, Ser-535, and Ser-537 each carry the phosphoserine modification. Residues 539–594 (SSSTLSTLELDAAEKDRKLQEKEKQIEELKRKLEQEQKLVEVLKMQLEVEKRGQQR) are a coiled coil. Residues 557–585 (LQEKEKQIEELKRKLEQEQKLVEVLKMQL) form a required for interaction with itself and with MRTFA region. Disordered stretches follow at residues 588-646 (EKRG…SVGQ) and 794-846 (LQYQ…PQQF). Positions 595–606 (PPDPQPSDPPHP) are enriched in pro residues. A Glycyl lysine isopeptide (Lys-Gly) (interchain with G-Cter in SUMO1) cross-link involves residue Lys-622. Over residues 794–821 (LQYQRQPGPTNQQPFVSKTSNPALQSRT) the composition is skewed to polar residues. Phosphoserine is present on Ser-913. The tract at residues 969–988 (GTLPSATDTGPLQNSSEDRE) is disordered. Residues 972 to 983 (PSATDTGPLQNS) are compositionally biased toward polar residues.

Interacts with MRTFA and SRF. O-glycosylated. Widely expressed. High expression in heart, brain and testis. Lower expression in lung, liver and kidney.

It localises to the nucleus. Its function is as follows. Acts as a transcriptional coactivator of serum response factor (SRF). Required for skeletal myogenic differentiation. The protein is Myocardin-related transcription factor B (Mrtfb) of Mus musculus (Mouse).